We begin with the raw amino-acid sequence, 341 residues long: Phosphate acyltransferase (341 aa).

The protein belongs to the PlsX family. As to quaternary structure, homodimer. Probably interacts with PlsY.

It localises to the cytoplasm. It carries out the reaction a fatty acyl-[ACP] + phosphate = an acyl phosphate + holo-[ACP]. The protein operates within lipid metabolism; phospholipid metabolism. Catalyzes the reversible formation of acyl-phosphate (acyl-PO(4)) from acyl-[acyl-carrier-protein] (acyl-ACP). This enzyme utilizes acyl-ACP as fatty acyl donor, but not acyl-CoA. This is Phosphate acyltransferase from Vibrio cholerae serotype O1 (strain ATCC 39541 / Classical Ogawa 395 / O395).